The sequence spans 824 residues: Disintegrin and metalloproteinase domain-containing protein 8 (824 aa).

Positions methionine 1 to alanine 16 are cleaved as a signal peptide. The Extracellular segment spans residues isoleucine 17–proline 655. 2 N-linked (GlcNAc...) asparagine glycosylation sites follow: asparagine 67 and asparagine 91. Residues arginine 200 to proline 400 form the Peptidase M12B domain. 12 disulfides stabilise this stretch: cysteine 310–cysteine 395, cysteine 351–cysteine 379, cysteine 353–cysteine 362, cysteine 435–cysteine 457, cysteine 448–cysteine 454, cysteine 466–cysteine 486, cysteine 473–cysteine 503, cysteine 498–cysteine 508, cysteine 566–cysteine 613, cysteine 613–cysteine 623, cysteine 617–cysteine 629, and cysteine 631–cysteine 640. A Zn(2+)-binding site is contributed by histidine 334. Glutamate 335 is an active-site residue. The Zn(2+) site is built by histidine 338 and histidine 344. One can recognise a Disintegrin domain in the interval glycine 408–asparagine 494. The N-linked (GlcNAc...) asparagine glycan is linked to asparagine 436. One can recognise an EGF-like domain in the interval arginine 609–alanine 641. A glycan (N-linked (GlcNAc...) asparagine) is linked at asparagine 612. A helical transmembrane segment spans residues valine 656–isoleucine 676. The Cytoplasmic segment spans residues valine 677–proline 824. Disordered regions lie at residues valine 710–valine 756 and lysine 776–proline 824. Residues arginine 747 to valine 756 show a composition bias toward pro residues. A compositionally biased stretch (low complexity) spans proline 788–proline 804.

In terms of assembly, interacts with FST3. Zn(2+) serves as cofactor. As to expression, expressed on neutrophils and monocytes.

Its subcellular location is the membrane. Functionally, possible involvement in extravasation of leukocytes. This is Disintegrin and metalloproteinase domain-containing protein 8 (ADAM8) from Homo sapiens (Human).